Consider the following 718-residue polypeptide: DNA ligase (718 aa).

Residues 44–48 (DADYD), 93–94 (SL), and Glu127 each bind NAD(+). Catalysis depends on Lys129, which acts as the N6-AMP-lysine intermediate. Residues Arg150, Glu186, Lys302, and Lys326 each contribute to the NAD(+) site. Cys432, Cys435, Cys456, and Cys462 together coordinate Zn(2+). In terms of domain architecture, BRCT spans 640 to 718 (TAGSPVAGKT…EDEWLALISG (79 aa)).

The protein belongs to the NAD-dependent DNA ligase family. LigA subfamily. Mg(2+) is required as a cofactor. It depends on Mn(2+) as a cofactor.

It carries out the reaction NAD(+) + (deoxyribonucleotide)n-3'-hydroxyl + 5'-phospho-(deoxyribonucleotide)m = (deoxyribonucleotide)n+m + AMP + beta-nicotinamide D-nucleotide.. Its function is as follows. DNA ligase that catalyzes the formation of phosphodiester linkages between 5'-phosphoryl and 3'-hydroxyl groups in double-stranded DNA using NAD as a coenzyme and as the energy source for the reaction. It is essential for DNA replication and repair of damaged DNA. The chain is DNA ligase from Rhizobium etli (strain ATCC 51251 / DSM 11541 / JCM 21823 / NBRC 15573 / CFN 42).